The sequence spans 445 residues: 6-phosphogluconate dehydrogenase, decarboxylating (445 aa).

NADP(+) is bound by residues 1 to 4 (AVMG), 22 to 24 (NRS), 63 to 65 (VQA), and asparagine 91. Substrate contacts are provided by residues asparagine 91 and 117–119 (SGG). Lysine 172 functions as the Proton acceptor in the catalytic mechanism. 175 to 176 (HN) is a binding site for substrate. Glutamate 179 serves as the catalytic Proton donor. Substrate-binding residues include tyrosine 180, lysine 249, arginine 276, arginine 434, and histidine 440.

Belongs to the 6-phosphogluconate dehydrogenase family. Homodimer.

The catalysed reaction is 6-phospho-D-gluconate + NADP(+) = D-ribulose 5-phosphate + CO2 + NADPH. It participates in carbohydrate degradation; pentose phosphate pathway; D-ribulose 5-phosphate from D-glucose 6-phosphate (oxidative stage): step 3/3. In terms of biological role, catalyzes the oxidative decarboxylation of 6-phosphogluconate to ribulose 5-phosphate and CO(2), with concomitant reduction of NADP to NADPH. The chain is 6-phosphogluconate dehydrogenase, decarboxylating (gnd) from Pseudescherichia vulneris (Escherichia vulneris).